Reading from the N-terminus, the 145-residue chain is Large ribosomal subunit protein uL13 (145 aa).

The protein belongs to the universal ribosomal protein uL13 family. As to quaternary structure, part of the 50S ribosomal subunit.

Its function is as follows. This protein is one of the early assembly proteins of the 50S ribosomal subunit, although it is not seen to bind rRNA by itself. It is important during the early stages of 50S assembly. The sequence is that of Large ribosomal subunit protein uL13 from Bacillus cytotoxicus (strain DSM 22905 / CIP 110041 / 391-98 / NVH 391-98).